Reading from the N-terminus, the 157-residue chain is 3-hydroxyacyl-[acyl-carrier-protein] dehydratase FabZ (157 aa).

His58 is an active-site residue.

It belongs to the thioester dehydratase family. FabZ subfamily.

It is found in the cytoplasm. The enzyme catalyses a (3R)-hydroxyacyl-[ACP] = a (2E)-enoyl-[ACP] + H2O. Its function is as follows. Involved in unsaturated fatty acids biosynthesis. Catalyzes the dehydration of short chain beta-hydroxyacyl-ACPs and long chain saturated and unsaturated beta-hydroxyacyl-ACPs. This Brucella abortus biovar 1 (strain 9-941) protein is 3-hydroxyacyl-[acyl-carrier-protein] dehydratase FabZ.